Consider the following 479-residue polypeptide: Anaerobic nitric oxide reductase flavorubredoxin (479 aa).

The segment at 30-210 (LRGSSYNSYL…PFSRLVTPKI (181 aa)) is zinc metallo-hydrolase. Fe cation-binding residues include histidine 79, glutamate 81, aspartate 83, histidine 147, aspartate 166, and histidine 227. In terms of domain architecture, Flavodoxin-like spans 254-393 (ITIFYDTMSN…LCRQHGRDIA (140 aa)). Residues 260–264 (TMSNN) and 342–369 (AFGS…EMSL) contribute to the FMN site. The Rubredoxin-like domain maps to 423–474 (GPKMQCSVCQWIYDPAQGEPLQDVAPGTPWSDVPDNFLCPECSLGKDVFDVL). Fe cation-binding residues include cysteine 428, cysteine 431, cysteine 461, and cysteine 464.

This sequence in the N-terminal section; belongs to the zinc metallo-hydrolase group 3 family. Homotetramer. The cofactor is Fe cation. Requires FMN as cofactor.

It is found in the cytoplasm. Its pathway is nitrogen metabolism; nitric oxide reduction. In terms of biological role, anaerobic nitric oxide reductase; uses NADH to detoxify nitric oxide (NO), protecting several 4Fe-4S NO-sensitive enzymes. Has at least 2 reductase partners, only one of which (NorW, flavorubredoxin reductase) has been identified. NO probably binds to the di-iron center; electrons enter from the NorW at rubredoxin and are transferred sequentially to the FMN center and the di-iron center. Also able to function as an aerobic oxygen reductase. This chain is Anaerobic nitric oxide reductase flavorubredoxin, found in Salmonella choleraesuis (strain SC-B67).